A 499-amino-acid polypeptide reads, in one-letter code: Probable cytosol aminopeptidase (499 aa).

Mn(2+)-binding residues include K263 and D268. The active site involves K275. Mn(2+) contacts are provided by D286, D345, and E347. R349 is a catalytic residue.

This sequence belongs to the peptidase M17 family. Mn(2+) serves as cofactor.

It is found in the cytoplasm. It carries out the reaction Release of an N-terminal amino acid, Xaa-|-Yaa-, in which Xaa is preferably Leu, but may be other amino acids including Pro although not Arg or Lys, and Yaa may be Pro. Amino acid amides and methyl esters are also readily hydrolyzed, but rates on arylamides are exceedingly low.. The enzyme catalyses Release of an N-terminal amino acid, preferentially leucine, but not glutamic or aspartic acids.. In terms of biological role, presumably involved in the processing and regular turnover of intracellular proteins. Catalyzes the removal of unsubstituted N-terminal amino acids from various peptides. This Chlamydia caviae (strain ATCC VR-813 / DSM 19441 / 03DC25 / GPIC) (Chlamydophila caviae) protein is Probable cytosol aminopeptidase.